The sequence spans 369 residues: Glutamate 5-kinase (369 aa).

Lys-9 contacts ATP. Substrate contacts are provided by Ser-49, Asp-136, and Asn-148. Residues 168–169 (TD) and 210–216 (TGGMLTK) each bind ATP. Positions 275-355 (QGSIWVDKGA…KGVLIYRDDW (81 aa)) constitute a PUA domain.

Belongs to the glutamate 5-kinase family.

Its subcellular location is the cytoplasm. The enzyme catalyses L-glutamate + ATP = L-glutamyl 5-phosphate + ADP. Its pathway is amino-acid biosynthesis; L-proline biosynthesis; L-glutamate 5-semialdehyde from L-glutamate: step 1/2. Its function is as follows. Catalyzes the transfer of a phosphate group to glutamate to form L-glutamate 5-phosphate. This Streptococcus pneumoniae (strain Hungary19A-6) protein is Glutamate 5-kinase.